A 200-amino-acid polypeptide reads, in one-letter code: Small ribosomal subunit protein uS4 (200 aa).

Positions 1–43 (MARYTGPRGRRDRRAGVMLSSMRKNPLEKKPYPPGEHGRDRQR) are disordered. Positions 25–43 (NPLEKKPYPPGEHGRDRQR) are enriched in basic and acidic residues. Residues 92–158 (LRMDNVVYRM…QPIQEAVEQV (67 aa)) enclose the S4 RNA-binding domain.

Belongs to the universal ribosomal protein uS4 family. In terms of assembly, part of the 30S ribosomal subunit. Contacts protein S5. The interaction surface between S4 and S5 is involved in control of translational fidelity.

One of the primary rRNA binding proteins, it binds directly to 16S rRNA where it nucleates assembly of the body of the 30S subunit. Its function is as follows. With S5 and S12 plays an important role in translational accuracy. This chain is Small ribosomal subunit protein uS4, found in Rubrobacter xylanophilus (strain DSM 9941 / JCM 11954 / NBRC 16129 / PRD-1).